We begin with the raw amino-acid sequence, 177 residues long: MSDLTTIARPYAKAAFDFAVDKGELDQWGQMLTFAAEVAQNDDVHNLLSGSMTAEKLAEVFIVICGEQFDEFGQNLIKVMAENGRLMAFPDVCKEFFILKKEYEKEIDVEVTSAVELSEEQRAEISSKLEQRLARKVQLNCSIDETLLSGVIIRAGDLVIDNSARSRLDRLSDALQS.

It belongs to the ATPase delta chain family. As to quaternary structure, F-type ATPases have 2 components, F(1) - the catalytic core - and F(0) - the membrane proton channel. F(1) has five subunits: alpha(3), beta(3), gamma(1), delta(1), epsilon(1). F(0) has three main subunits: a(1), b(2) and c(10-14). The alpha and beta chains form an alternating ring which encloses part of the gamma chain. F(1) is attached to F(0) by a central stalk formed by the gamma and epsilon chains, while a peripheral stalk is formed by the delta and b chains.

The protein localises to the cell inner membrane. Functionally, f(1)F(0) ATP synthase produces ATP from ADP in the presence of a proton or sodium gradient. F-type ATPases consist of two structural domains, F(1) containing the extramembraneous catalytic core and F(0) containing the membrane proton channel, linked together by a central stalk and a peripheral stalk. During catalysis, ATP synthesis in the catalytic domain of F(1) is coupled via a rotary mechanism of the central stalk subunits to proton translocation. In terms of biological role, this protein is part of the stalk that links CF(0) to CF(1). It either transmits conformational changes from CF(0) to CF(1) or is implicated in proton conduction. This Vibrio atlanticus (strain LGP32) (Vibrio splendidus (strain Mel32)) protein is ATP synthase subunit delta 1.